Reading from the N-terminus, the 299-residue chain is Taste receptor type 2 member 45 (299 aa).

Position 1 (M1) is a topological domain, extracellular. Residues 2–22 form a helical membrane-spanning segment; sequence ITFLPIIFSILVVVTFVIGNF. The Cytoplasmic segment spans residues 23 to 55; the sequence is ANGFIALVNSTEWVKRQKISFADQIVTALAVSR. The helical transmembrane segment at 56 to 76 threads the bilayer; the sequence is VGLLWVLLLNWYSTVLNPAFC. Over 77–98 the chain is Extracellular; sequence SVELRTTAYNIWAVTGHFSNWP. The chain crosses the membrane as a helical span at residues 99 to 119; the sequence is ATSLSIFYLLKIANFSNLIFL. Topologically, residues 120–126 are cytoplasmic; sequence RLKRRVK. The chain crosses the membrane as a helical span at residues 127-147; sequence SVILVVLLGPLLFLACHLFVV. Topologically, residues 148–178 are extracellular; it reads NMNQIVWTKEYEGNMTWKIKLRRAMYLSDTT. N161 is a glycosylation site (N-linked (GlcNAc...) asparagine). Residues 179–199 form a helical membrane-spanning segment; that stretch reads VTMLANLVPFTVTLISFLLLV. Residues 200–229 lie on the Cytoplasmic side of the membrane; the sequence is CSLCKHLKKMQLHGKGSQDPSTKVHIKVLQ. Residues 230-250 form a helical membrane-spanning segment; it reads TVISFFLLRAIYFVSVIISVW. The Extracellular segment spans residues 251–259; it reads SFKNLENKP. The helical transmembrane segment at 260 to 280 threads the bilayer; it reads VFMFCQAIGFSCSSAHPFILI. The Cytoplasmic portion of the chain corresponds to 281–299; sequence WGNKKLKQTYLSVLWQMRY.

The protein belongs to the G-protein coupled receptor T2R family. Expressed in subsets of taste receptor cells of the tongue and exclusively in gustducin-positive cells.

Its subcellular location is the membrane. Receptor that may play a role in the perception of bitterness and is gustducin-linked. May play a role in sensing the chemical composition of the gastrointestinal content. The activity of this receptor may stimulate alpha gustducin, mediate PLC-beta-2 activation and lead to the gating of TRPM5. In Homo sapiens (Human), this protein is Taste receptor type 2 member 45 (TAS2R45).